The sequence spans 261 residues: ClpXP adapter protein SpxH (261 aa).

The protein belongs to the SpxH family. In terms of assembly, interacts with Spx.

It localises to the cytoplasm. Its function is as follows. Adapter protein required for efficient degradation of Spx by ClpXP under non-stress conditions. Interaction with Spx stabilizes Spx and exposes the C-terminus of Spx for recognition and proteolysis by ClpXP. This is ClpXP adapter protein SpxH from Staphylococcus aureus.